We begin with the raw amino-acid sequence, 273 residues long: Formamidopyrimidine-DNA glycosylase (273 aa).

The active-site Schiff-base intermediate with DNA is Pro2. The Proton donor role is filled by Glu3. The active-site Proton donor; for beta-elimination activity is the Lys59. Positions 92 and 111 each coordinate DNA. The segment at 239–273 (KVYGKTDEPCVVCGKPIEKIKLNGRGTHFCPNCQK) adopts an FPG-type zinc-finger fold. The active-site Proton donor; for delta-elimination activity is Arg263.

This sequence belongs to the FPG family. In terms of assembly, monomer. Requires Zn(2+) as cofactor.

The enzyme catalyses Hydrolysis of DNA containing ring-opened 7-methylguanine residues, releasing 2,6-diamino-4-hydroxy-5-(N-methyl)formamidopyrimidine.. The catalysed reaction is 2'-deoxyribonucleotide-(2'-deoxyribose 5'-phosphate)-2'-deoxyribonucleotide-DNA = a 3'-end 2'-deoxyribonucleotide-(2,3-dehydro-2,3-deoxyribose 5'-phosphate)-DNA + a 5'-end 5'-phospho-2'-deoxyribonucleoside-DNA + H(+). Functionally, involved in base excision repair of DNA damaged by oxidation or by mutagenic agents. Acts as a DNA glycosylase that recognizes and removes damaged bases. Has a preference for oxidized purines, such as 7,8-dihydro-8-oxoguanine (8-oxoG). Has AP (apurinic/apyrimidinic) lyase activity and introduces nicks in the DNA strand. Cleaves the DNA backbone by beta-delta elimination to generate a single-strand break at the site of the removed base with both 3'- and 5'-phosphates. The sequence is that of Formamidopyrimidine-DNA glycosylase from Listeria monocytogenes serotype 4b (strain F2365).